Consider the following 87-residue polypeptide: Selenoprotein W (87 aa).

Positions 10–13 form a cross-link, cysteinyl-selenocysteine (Cys-Sec); redox-active; sequence CGAU. Residue U13 is a non-standard amino acid, selenocysteine. C37 bears the S-glutathionyl cysteine mark.

It belongs to the SelWTH family. Selenoprotein W subfamily. As to quaternary structure, interacts with DPYSL2, PRDX1, YWHAB, YWHAG, HSP70 and HSP90.

The protein localises to the cytoplasm. Plays a role as a glutathione (GSH)-dependent antioxidant. May be involved in a redox-related process. May play a role in the myopathies of selenium deficiency. The protein is Selenoprotein W of Sus scrofa (Pig).